We begin with the raw amino-acid sequence, 219 residues long: Probable glutathione S-transferase GSTF1 (219 aa).

One can recognise a GST N-terminal domain in the interval 2 to 83 (TPVKVFGPAQ…YILRKYKTRE (82 aa)). Residues Ser12, 41-42 (HK), 54-55 (QI), and 67-68 (ES) each bind glutathione. In terms of domain architecture, GST C-terminal spans 91 to 219 (NLREAAMVDV…LAAVMAPQGA (129 aa)).

This sequence belongs to the GST superfamily. Phi family. As to expression, constitutively expressed in roots.

The catalysed reaction is RX + glutathione = an S-substituted glutathione + a halide anion + H(+). Functionally, conjugation of reduced glutathione to a wide number of exogenous and endogenous hydrophobic electrophiles. In Oryza sativa subsp. japonica (Rice), this protein is Probable glutathione S-transferase GSTF1 (GSTF1).